Reading from the N-terminus, the 93-residue chain is Em protein (93 aa).

The segment at 1 to 93 (MASGQQERSQ…IDESKFKTKS (93 aa)) is disordered. Composition is skewed to basic and acidic residues over residues 9-19 (SQLDRKAREGE), 38-52 (AEGR…REQM), and 73-93 (GGDR…KTKS).

Belongs to the small hydrophilic plant seed protein family.

Its function is as follows. It is thought to provide protection for the cytoplasm during the desiccation stage of embryo development. This is Em protein (EM) from Triticum aestivum (Wheat).